The following is a 461-amino-acid chain: Argininosuccinate lyase (461 aa).

This sequence belongs to the lyase 1 family. Argininosuccinate lyase subfamily.

The protein resides in the cytoplasm. It carries out the reaction 2-(N(omega)-L-arginino)succinate = fumarate + L-arginine. The protein operates within amino-acid biosynthesis; L-arginine biosynthesis; L-arginine from L-ornithine and carbamoyl phosphate: step 3/3. This is Argininosuccinate lyase from Syntrophotalea carbinolica (strain DSM 2380 / NBRC 103641 / GraBd1) (Pelobacter carbinolicus).